Reading from the N-terminus, the 139-residue chain is Plastocyanin (139 aa).

Positions 1 to 34 are cleaved as a signal peptide; the sequence is MKLIAASLRRLSLAVLTVLLVVSSFAVFTPSASA. One can recognise a Plastocyanin-like domain in the interval 35 to 139; the sequence is ETYTVKLGSD…GMVGKITVAG (105 aa). Residues His73, Cys123, His126, and Met131 each coordinate Cu cation.

This sequence belongs to the plastocyanin family. Cu(2+) serves as cofactor.

The protein resides in the cellular thylakoid membrane. In terms of biological role, participates in electron transfer between P700 and the cytochrome b6-f complex in photosystem I. This Nostoc sp. (strain PCC 7120 / SAG 25.82 / UTEX 2576) protein is Plastocyanin (petE).